Here is a 145-residue protein sequence, read N- to C-terminus: Large ribosomal subunit protein uL11 (145 aa).

It belongs to the universal ribosomal protein uL11 family. In terms of assembly, part of the ribosomal stalk of the 50S ribosomal subunit. Interacts with L10 and the large rRNA to form the base of the stalk. L10 forms an elongated spine to which L12 dimers bind in a sequential fashion forming a multimeric L10(L12)X complex. Post-translationally, one or more lysine residues are methylated.

Its function is as follows. Forms part of the ribosomal stalk which helps the ribosome interact with GTP-bound translation factors. The protein is Large ribosomal subunit protein uL11 of Persephonella marina (strain DSM 14350 / EX-H1).